Reading from the N-terminus, the 83-residue chain is High-potential iron-sulfur protein (83 aa).

[4Fe-4S] cluster is bound by residues Cys-43, Cys-46, Cys-61, and Cys-75.

Belongs to the high-potential iron-sulfur protein (HiPIP) family. As to quaternary structure, homodimer.

It localises to the periplasm. In terms of biological role, specific class of high-redox-potential 4Fe-4S ferredoxins. Functions in anaerobic electron transport in most purple and in some other photosynthetic bacteria and in at least one genus (Paracoccus) of halophilic, denitrifying bacteria. This chain is High-potential iron-sulfur protein, found in Isochromatium buderi (Chromatium buderi).